The following is a 343-amino-acid chain: Nod factor export ATP-binding protein I (343 aa).

The span at Met1–Ser14 shows a compositional bias: polar residues. The segment at Met1–Arg38 is disordered. In terms of domain architecture, ABC transporter spans Ile45–Tyr275. Gly77 to Ser84 serves as a coordination point for ATP.

The protein belongs to the ABC transporter superfamily. Lipooligosaccharide exporter (TC 3.A.1.102) family. As to quaternary structure, the complex is composed of two ATP-binding proteins (NodI) and two transmembrane proteins (NodJ).

It is found in the cell inner membrane. Part of the ABC transporter complex NodIJ involved in the export of the nodulation factors (Nod factors), the bacterial signal molecules that induce symbiosis and subsequent nodulation induction. Nod factors are LCO (lipo-chitin oligosaccharide), a modified beta-1,4-linked N-acetylglucosamine oligosaccharide. This subunit is responsible for energy coupling to the transport system. The sequence is that of Nod factor export ATP-binding protein I from Sinorhizobium fredii (strain NBRC 101917 / NGR234).